We begin with the raw amino-acid sequence, 256 residues long: 3-methyl-2-oxobutanoate hydroxymethyltransferase (256 aa).

2 residues coordinate Mg(2+): Asp-42 and Asp-86. 3-methyl-2-oxobutanoate contacts are provided by residues 42 to 43 (DS), Asp-86, and Lys-116. Glu-118 is a binding site for Mg(2+). Residue Glu-185 is the Proton acceptor of the active site.

Belongs to the PanB family. Homodecamer; pentamer of dimers. Mg(2+) is required as a cofactor.

The protein localises to the cytoplasm. It carries out the reaction 3-methyl-2-oxobutanoate + (6R)-5,10-methylene-5,6,7,8-tetrahydrofolate + H2O = 2-dehydropantoate + (6S)-5,6,7,8-tetrahydrofolate. Its pathway is cofactor biosynthesis; (R)-pantothenate biosynthesis; (R)-pantoate from 3-methyl-2-oxobutanoate: step 1/2. In terms of biological role, catalyzes the reversible reaction in which hydroxymethyl group from 5,10-methylenetetrahydrofolate is transferred onto alpha-ketoisovalerate to form ketopantoate. The polypeptide is 3-methyl-2-oxobutanoate hydroxymethyltransferase (Prochlorococcus marinus (strain SARG / CCMP1375 / SS120)).